The sequence spans 251 residues: Putative glutamine amidotransferase YLR126C (251 aa).

The 185-residue stretch at 48 to 232 (EVFHVQKNVF…NRYERQCQEL (185 aa)) folds into the Glutamine amidotransferase type-1 domain. Active-site for GATase activity residues include C112, H198, and E200.

It is found in the cytoplasm. Functionally, may have a role in copper and iron homeostasis. The sequence is that of Putative glutamine amidotransferase YLR126C from Saccharomyces cerevisiae (strain ATCC 204508 / S288c) (Baker's yeast).